The following is a 273-amino-acid chain: Putative phosphoenolpyruvate synthase regulatory protein (273 aa).

153 to 160 serves as a coordination point for ADP; sequence GVSRSGKT.

Belongs to the pyruvate, phosphate/water dikinase regulatory protein family. PSRP subfamily.

It carries out the reaction [pyruvate, water dikinase] + ADP = [pyruvate, water dikinase]-phosphate + AMP + H(+). The catalysed reaction is [pyruvate, water dikinase]-phosphate + phosphate + H(+) = [pyruvate, water dikinase] + diphosphate. Its function is as follows. Bifunctional serine/threonine kinase and phosphorylase involved in the regulation of the phosphoenolpyruvate synthase (PEPS) by catalyzing its phosphorylation/dephosphorylation. The polypeptide is Putative phosphoenolpyruvate synthase regulatory protein (Polaromonas naphthalenivorans (strain CJ2)).